The chain runs to 210 residues: BAG family molecular chaperone regulator 2 (210 aa).

Ala-2 carries the post-translational modification N-acetylalanine. Residues Ser-20, Ser-31, and Ser-73 each carry the phosphoserine modification. The stretch at 20–60 (SMADRSSRLLESLDQLELRVEALRDAATAVEQEKEILLEMI) forms a coiled coil. Residues 109–189 (SLKHATRIID…NIDNSDKAIK (81 aa)) enclose the BAG domain.

In terms of assembly, binds to the ATPase domain of HSP/HSC70 chaperones. May interact with NWD1. Interacts with HSPA1A (via NBD), HSPA1B (via NBD) and HSPA8. May interact with DNJC9; the interaction seems to be histone-dependent.

Functionally, co-chaperone for HSP70 and HSC70 chaperone proteins. Acts as a nucleotide-exchange factor (NEF) promoting the release of ADP from the HSP70 and HSC70 proteins thereby triggering client/substrate protein release. This Mus musculus (Mouse) protein is BAG family molecular chaperone regulator 2 (Bag2).